The sequence spans 5478 residues: Mucin-12 (5478 aa).

Positions 1–16 (MLVIWILTLALRLCAS) are cleaved as a signal peptide. Topologically, residues 17–5380 (VTTVTPEGSA…EFNIAKSLVY (5364 aa)) are extracellular. N154, N170, and N176 each carry an N-linked (GlcNAc...) asparagine glycan. The tract at residues 212–737 (LDSSTNSGHS…GSTETTLLPD (526 aa)) is disordered. Copy 1 of the repeat occupies 222–240 (EESTVSHSGPGATGTTLFP). The interval 222 to 4761 (EESTVSHSGP…PGSTQTMHFP (4540 aa)) is 28 X 19 AA approximate tandem repeats of E-E-S-X-X-X-H-X-X-P-X-X-T-X-T-X-X-X-P. Composition is skewed to polar residues over residues 226 to 246 (VSHSGPGATGTTLFPSHSATS), 255 to 288 (SPITSASMETTALPGSTTTAGLSEKSTTFYSSPR), 296 to 313 (PARTTSSGVSEKSTTSHS), and 325 to 342 (DSTTMPGVSQESTASHSI). Over residues 343-366 (PGSTDTTLSPGTTTPSSLGPESTT) the composition is skewed to low complexity. Polar residues predominate over residues 367–387 (FHSSPGYTKTTRLPDNTTTSG). N-linked (GlcNAc...) asparagine glycosylation occurs at N382. Low complexity predominate over residues 396-413 (HSSTGSPHTTLSPSSSTT). Over residues 419-440 (TTFQSWPSSKDTSPAPSGTTSA) the composition is skewed to polar residues. 2 stretches are compositionally biased toward low complexity: residues 445–466 (STTYHSSPSSTPTTHFSASSTT) and 478–495 (SSPVATATTPPPARSATS). 2 tandem repeats follow at residues 471 to 489 (EESTPVHSSPVATATTPPP) and 499 to 517 (EESTAYHRSPGSTQTMHFP). Positions 531–554 (TFHGSTTHTKSSTPSTTAALAHTS) are enriched in low complexity. Polar residues-rich tracts occupy residues 555–575 (YHSSLGSTETTHFRDSSTISG) and 608–648 (STPS…SPDT). The segment covering 654-669 (SMTSSGVSEESTTSHS) has biased composition (low complexity). The stretch at 662–680 (EESTTSHSRPGSTHTTAFP) is repeat 4. 2 stretches are compositionally biased toward polar residues: residues 670 to 715 (RPGS…TASS) and 722 to 737 (TFHSRPGSTETTLLPD). N738 carries an N-linked (GlcNAc...) asparagine glycan. Disordered stretches follow at residues 749–4847 (MPVH…HFTT), 4887–5034 (SSRS…THTV), 5048–5071 (STAFHSSSDATGTTPLPARSTASD), and 5093–5112 (ASSSTSGLTEESTTFHTSPS). Composition is skewed to polar residues over residues 751 to 783 (VHSSTRSPHTTLSPAGSTTRQGESTTFHSWPSS) and 792 to 842 (TTTS…TQTM). Repeat unit 5 spans residues 827–845 (EESTTYHSSPGSTQTMHFP). Residues 859–877 (TSHSSTTHTISSAPSTTSA) show a composition bias toward low complexity. 2 stretches are compositionally biased toward polar residues: residues 884-899 (SYHSSPGSTATTHFPD) and 928-970 (RSTT…TTFH). Over residues 971 to 1007 (SSPRSPATTLSPASTTSSGVSEESTTSRSRPGSTHTT) the composition is skewed to low complexity. Over residues 1009-1021 (FPDSTTTPGLSRH) the composition is skewed to polar residues. Positions 1022 to 1065 (STTSHSSPGSTDTTLLPASTTTSGPSQESTTSHSSSGSTDTALS) are enriched in low complexity. Polar residues-rich tracts occupy residues 1066–1101 (PGSTTALSFGQESTTFHSNPGSTHTTLFPDSTTSSG) and 1108–1138 (RVHSSTGSPRTTLSPASSTSPGLQGESTAFQ). The span at 1139–1157 (THPASTHTTPSPPSTATAP) shows a compositional bias: low complexity. Repeat 6 spans residues 1159–1177 (EESTTYHRSPGSTPTTHFP). 2 stretches are compositionally biased toward polar residues: residues 1160 to 1184 (ESTTYHRSPGSTPTTHFPASSTTSG) and 1191 to 1207 (IFHSSPDASGTTPSSAH). 3 stretches are compositionally biased toward low complexity: residues 1208–1220 (STTSGRGESTTSR), 1229–1241 (TTLPGSTTTPGLS), and 1249–1262 (SSPRSPTTTLSPAS). Polar residues-rich tracts occupy residues 1271–1324 (ESTT…TTSV), 1331–1357 (TFHSRPASTHTTLFTEDSTTSGLTEES), and 1364–1377 (PASTQTGLPATLTT). 2 stretches are compositionally biased toward low complexity: residues 1384-1396 (STTFPSSSGSTGT) and 1411-1438 (ESTPSRLSPSSTETTTLPGSPTTPSLSE). A compositionally biased stretch (polar residues) spans 1439-1448 (KSTTFYTSPR). A compositionally biased stretch (low complexity) spans 1458 to 1481 (TTTSSGVSEESSTSHSQPGSTHTT). Residues 1466–1484 (EESSTSHSQPGSTHTTAFP) form repeat 7. Polar residues predominate over residues 1483 to 1537 (FPDSTTTSDLSQEPTTSHSSQGSTEATLSPGSTTASSLGQQSTTFHSSPGDTETT). Low complexity predominate over residues 1552-1568 (STPTHSSTGSLHTTLTP). 2 stretches are compositionally biased toward polar residues: residues 1569 to 1586 (ASSTSAGLQEESTTFQSW) and 1606 to 1630 (VSTTYHSRPSSTPTTHFSASSTTLG). Repeat unit 8 spans residues 1633-1651 (EESTTVHSSPGATGTALFP). A compositionally biased stretch (polar residues) spans 1653–1708 (RSATSVLVGEPTTSPISSGSTETTALPGSTTTAGLSEKSTTFYSSPRSPDTTLSPA). The span at 1709–1724 (STTSSGVSEESTTSHS) shows a compositional bias: low complexity. Repeat unit 9 spans residues 1717-1735 (EESTTSHSRPGSTHTTAFP). 2 stretches are compositionally biased toward polar residues: residues 1725–1797 (RPGS…TTAS) and 1805–1840 (PVHSSTGSPHTTLSPAGSTTRQGESTTFQSWPSSKD). A glycan (N-linked (GlcNAc...) asparagine) is linked at N1793. 2 stretches are compositionally biased toward low complexity: residues 1856–1877 (STTSHGSPSSTPTTHFSASSTT) and 1889–1906 (SSPVATATTPSPARSTTS). A run of 2 repeats spans residues 1882 to 1900 (EESTTVHSSPVATATTPSP) and 1910 to 1928 (EESTAYHSSPGSTQTMHFP). Residues 1914–1935 (AYHSSPGSTQTMHFPESSTASG) show a composition bias toward polar residues. A compositionally biased stretch (low complexity) spans 1943–1959 (SHSSTTHTISSPPSTTS). 2 stretches are compositionally biased toward polar residues: residues 1967 to 1982 (SYHSSPGSTATTHFPD) and 2011 to 2053 (RSTT…TTFH). A compositionally biased stretch (low complexity) spans 2054 to 2082 (SSPRSPATTLSPASTTSSGVSEESTTSHS). Repeat unit 12 spans residues 2075–2093 (EESTTSHSRPGSTHTTAFP). The span at 2083–2104 (RPGSTHTTAFPDSTTTPGLSRH) shows a compositional bias: polar residues. The span at 2105-2130 (STTSHSSPGSTDTTLLPASTTTSGPS) shows a compositional bias: low complexity. Polar residues-rich tracts occupy residues 2131–2184 (QEST…TSSG) and 2191–2221 (RVHSSTGSPRTTLSPASSTSPGLQGESTAFQ). Residues 2222 to 2240 (THPASTHTTPSPPSTATAP) show a composition bias toward low complexity. Copy 13 of the repeat occupies 2242–2260 (EESTTYHRSPGSTPTTHFP). Composition is skewed to polar residues over residues 2243-2267 (ESTTYHRSPGSTPTTHFPASSTTSG) and 2274-2290 (IFHSSPDASGTTPSSAH). Low complexity-rich tracts occupy residues 2291-2303 (STTSGRGESTTSR), 2312-2324 (TTLPGSTTTPGLS), and 2332-2345 (SSPRSPTTTLSPAS). A compositionally biased stretch (polar residues) spans 2354-2392 (ESTTSRSQPGSTHSTVSPASTTTPGLSEESTTVYSSSPG). A compositionally biased stretch (low complexity) spans 2393–2407 (STETTVFPRTPTTSV). Composition is skewed to polar residues over residues 2414–2440 (TFHSRPASTHTTLFTEDSTTSGLTEES) and 2447–2460 (PASTQTGLPATLTT). 2 stretches are compositionally biased toward low complexity: residues 2467–2483 (STTFPSSSGSTGTTLSP) and 2494–2521 (ESTPSRLSPSSTETTTLPGSPTTPSLSE). Residues 2522–2531 (KSTTFYTSPR) show a composition bias toward polar residues. Residues 2541–2564 (TTTSSGVSEESSTSHSQPGSTHTT) are compositionally biased toward low complexity. Repeat unit 14 spans residues 2549–2567 (EESSTSHSQPGSTHTTAFP). A compositionally biased stretch (polar residues) spans 2566 to 2578 (FPDSTTTPGLSRH). The segment covering 2579-2604 (STTSHSSPGSTDTTLLPASTTTSGPS) has biased composition (low complexity). Polar residues-rich tracts occupy residues 2605 to 2658 (QEST…TSSG) and 2665 to 2695 (RVHSSTGSPRTTLSPASSTSPGLQGESTTFQ). Residues 2696–2714 (THPASTHTTPSPPSTATAP) are compositionally biased toward low complexity. Repeat 15 spans residues 2716-2734 (EESTTYHRSPGSTPTTHFP). Polar residues-rich tracts occupy residues 2717 to 2741 (ESTTYHRSPGSTPTTHFPASSTTSG) and 2748 to 2764 (IFHSSPDASGTTPSSAH). Low complexity-rich tracts occupy residues 2765-2777 (STTSGRGESTTSR), 2786-2798 (TTLPGSTTTPGLS), and 2806-2819 (SSPRSPTTTLSPAS). Composition is skewed to polar residues over residues 2828 to 2881 (ESTT…TTSV), 2888 to 2914 (TFHSRPASTHTTLFTEDSTTSGLTEES), and 2921 to 2934 (PASTQTGLPATLTT). Composition is skewed to low complexity over residues 2941-2957 (STTFPSSSGSTGTTLSP) and 2968-2995 (ESTPSRLSPSSTETTTLPGSPTTPSLSE). Residues 2996 to 3005 (KSTTFYTSPR) are compositionally biased toward polar residues. A compositionally biased stretch (low complexity) spans 3015–3038 (TTTSSGVSEESSTSHSQPGSTHTT). Copy 16 of the repeat occupies 3023-3041 (EESSTSHSQPGSTHTTAFP). The span at 3040-3094 (FPDSTTTSGLSQEPTASHSSQGSTEATLSPGSTTASSLGQQSTTFHSSPGDTETT) shows a compositional bias: polar residues. The segment covering 3109 to 3125 (STPTHSSTGSLHTTLTP) has biased composition (low complexity). Polar residues-rich tracts occupy residues 3126–3143 (ASSTSAGLQEESTTFQSW) and 3163–3187 (VSTTYHSRPSSTPTTHFSASSTTLG). Residues 3190 to 3208 (EESTTVHSSPGATGTALFP) form repeat 17. A compositionally biased stretch (polar residues) spans 3210–3265 (RSATSVLVGEPTTSPISSGSTETTALPGSTTTAGLSEKSTTFYSSPRSPDTTLSPA). Residues 3266 to 3281 (STTSSGVSEESTTSHS) show a composition bias toward low complexity. Repeat unit 18 spans residues 3274-3292 (EESTTSHSRPGSTHTTAFP). Polar residues-rich tracts occupy residues 3282-3354 (RPGS…TTAS) and 3362-3397 (PVHSSTGSPHTTLSPAGSTTRQGESTTFQSWPNSKD). N3350 carries N-linked (GlcNAc...) asparagine glycosylation. 2 stretches are compositionally biased toward low complexity: residues 3413–3434 (STTSHGSPSSTPTTHFSASSTT) and 3446–3463 (SSPVATATTPSPARSTTS). A run of 2 repeats spans residues 3439-3457 (EESTTVHSSPVATATTPSP) and 3467-3485 (EESTTYHSSPGSTQTMHFP). Positions 3468–3482 (ESTTYHSSPGSTQTM) are enriched in polar residues. Over residues 3499–3517 (TSHSSTTHTISSAPSTTSA) the composition is skewed to low complexity. Polar residues-rich tracts occupy residues 3524–3539 (SYHSSPGSTATTHFPD) and 3568–3610 (RSTT…TTFH). Positions 3611-3639 (SSPRSPATTLSPASTTSSGVSEESTTSHS) are enriched in low complexity. The stretch at 3632–3650 (EESTTSHSRPGSTHTTAFP) is repeat 21. Residues 3640 to 3661 (RPGSTHTTAFPDSTTTPGLSRH) show a composition bias toward polar residues. Positions 3662-3705 (STTSHSSPGSTDTTLLPASTTTSGSSQESTTSHSSSGSTDTALS) are enriched in low complexity. Polar residues-rich tracts occupy residues 3706-3741 (PGSTTALSFGQESTTFHSSPGSTHTTLFPDSTTSSG) and 3748-3778 (RVHSSTGSPRTTLSPASSTSPGLQGESTAFQ). Residues 3779-3797 (THPASTHTTPSPPSTATAP) show a composition bias toward low complexity. Repeat 22 spans residues 3799 to 3817 (EESTTYHRSPGSTPTTHFP). 2 stretches are compositionally biased toward polar residues: residues 3800–3824 (ESTTYHRSPGSTPTTHFPASSTTSG) and 3831–3847 (IFHSSPDASGTTPSSAH). Composition is skewed to low complexity over residues 3848–3860 (STTSGRGESTTSR), 3869–3881 (TTLPGSTTTPGLS), and 3889–3902 (SSPRSPTTTLSPAS). 3 stretches are compositionally biased toward polar residues: residues 3911-3963 (ESTT…TTTS), 3971-3997 (TFHSRPASTHTTLFTEDSTTSGLTEES), and 4004-4017 (PASTQTGLPATLTT). 2 stretches are compositionally biased toward low complexity: residues 4024-4036 (STTFPSSSGSTGT) and 4051-4078 (ESTPSRLSPSSTETTTLPGSPTTPSLSE). The span at 4079-4088 (KSTTFYTSPR) shows a compositional bias: polar residues. A compositionally biased stretch (low complexity) spans 4098–4121 (TTTSSGVSEESSTSHSQPGSTHTT). The stretch at 4106 to 4124 (EESSTSHSQPGSTHTTAFP) is repeat 23. Over residues 4123-4177 (FPDSTTTSGLSQEPTTSHSSQGSTEATLSPGSTTASSLGQQSTTFHSSPGDTETT) the composition is skewed to polar residues. Over residues 4192–4208 (STPTHSSTGSLHTTLTP) the composition is skewed to low complexity. Positions 4209 to 4226 (ASSTSTGLQEESTTFQSW) are enriched in polar residues. Positions 4227–4249 (PSSSDTTPSPPSTTAVPVEVSTT) are enriched in low complexity. The segment covering 4250 to 4270 (YHSRPSSTPTTHFSASSTTLG) has biased composition (polar residues). Repeat unit 24 spans residues 4273–4291 (EESTTVHSSPGATGTALFP). Polar residues predominate over residues 4293–4348 (RSATSVLVGEPTTSPISSGSTETTALPGSTTTAGLSEKSTTFYSSPRSPDTTLSPA). Over residues 4349–4364 (STTSSGVSEESTTSHS) the composition is skewed to low complexity. 2 stretches are compositionally biased toward polar residues: residues 4369–4437 (MHTT…TTAS) and 4445–4480 (PVHSSTGSPHTTLSPAGSTTRQGESTTFQSWPNSKD). An N-linked (GlcNAc...) asparagine glycan is attached at N4433. Composition is skewed to low complexity over residues 4496–4517 (STTSHGSPSSTPTTHFSASSTT) and 4529–4546 (SSPVATATTPSPARSTTS). A run of 2 repeats spans residues 4522–4540 (EESTTVHSSPVATATTPSP) and 4550–4568 (EESTTYHSSPGSTQTMHFP). The segment covering 4551–4571 (ESTTYHSSPGSTQTMHFPESN) has biased composition (polar residues). N-linked (GlcNAc...) asparagine glycosylation occurs at N4571. The segment covering 4582 to 4600 (TSHSSTTHTISSAPSTTSA) has biased composition (low complexity). 2 stretches are compositionally biased toward polar residues: residues 4607–4622 (SYHSSPGSTATTHFPD) and 4651–4688 (RSTTSVLLGESTTSPISSGSMETTALPGSTTTPGLSEK). Composition is skewed to low complexity over residues 4689-4710 (STTFHSSPSSTPTTHFSASSTT) and 4722-4739 (SSPVATATTPSPARSTTS). A run of 2 repeats spans residues 4715–4733 (EESTTVHSSPVATATTPSP) and 4743–4761 (EESTAYHSSPGSTQTMHFP). Over residues 4747-4768 (AYHSSPGSTQTMHFPESSTASG) the composition is skewed to polar residues. Residues 4776–4792 (SHSSTTHTISSPPSTTS) are compositionally biased toward low complexity. Composition is skewed to polar residues over residues 4800 to 4814 (SYHSSPGSIATTHFP) and 4887 to 4917 (SSRSPDQTLSPASMTSSSISGEPTSLYSQAE). The span at 4918–4931 (STHTTAFPASTTTS) shows a compositional bias: low complexity. 2 stretches are compositionally biased toward polar residues: residues 4932 to 5024 (GLSQ…STPF) and 5048 to 5061 (STAFHSSSDATGTT). Low complexity predominate over residues 5094-5112 (SSSTSGLTEESTTFHTSPS). The region spanning 5116–5154 (TIVSTESLETLAPGLCQEGQIWNGKQCVCPQGYVGYQCL) is the EGF-like domain. A disulfide bond links C5144 and C5153. The 108-residue stretch at 5168–5275 (LNATLGMTVK…TRTTLLDPDS (108 aa)) folds into the SEA domain. N-linked (GlcNAc...) asparagine glycans are attached at residues N5169, N5182, N5197, N5228, and N5264. The Cleavage motif motif lies at 5226–5233 (LLNGSIVV). The helical transmembrane segment at 5381–5401 (GIVGAVMAVLLLALIILIILF) threads the bilayer. At 5402–5478 (SLSQRKRHRE…QRPEMVASTV (77 aa)) the chain is on the cytoplasmic side.

Ubiquitous, with higher expression in colon. Down-regulated in colorectal cancer as well as in the colon of patients with ulcerative colitis (UC) and Crohn's disease (CD).

It localises to the membrane. Its function is as follows. Involved in epithelial cell protection, adhesion modulation, and signaling. May be involved in epithelial cell growth regulation. Stimulated by both cytokine TNF-alpha and TGF-beta in intestinal epithelium. The sequence is that of Mucin-12 (MUC12) from Homo sapiens (Human).